The following is a 506-amino-acid chain: Kynurenine 3-monooxygenase (506 aa).

The protein belongs to the aromatic-ring hydroxylase family. KMO subfamily. FAD is required as a cofactor.

The protein resides in the mitochondrion outer membrane. The enzyme catalyses L-kynurenine + NADPH + O2 + H(+) = 3-hydroxy-L-kynurenine + NADP(+) + H2O. The protein operates within cofactor biosynthesis; NAD(+) biosynthesis; quinolinate from L-kynurenine: step 1/3. Its function is as follows. Catalyzes the hydroxylation of L-kynurenine (L-Kyn) to form 3-hydroxy-L-kynurenine (L-3OHKyn). Required for synthesis of quinolinic acid. This Emericella nidulans (strain FGSC A4 / ATCC 38163 / CBS 112.46 / NRRL 194 / M139) (Aspergillus nidulans) protein is Kynurenine 3-monooxygenase (bna4).